Here is a 1342-residue protein sequence, read N- to C-terminus: DNA-directed RNA polymerase subunit beta (1342 aa).

Belongs to the RNA polymerase beta chain family. As to quaternary structure, the RNAP catalytic core consists of 2 alpha, 1 beta, 1 beta' and 1 omega subunit. When a sigma factor is associated with the core the holoenzyme is formed, which can initiate transcription.

It catalyses the reaction RNA(n) + a ribonucleoside 5'-triphosphate = RNA(n+1) + diphosphate. Its function is as follows. DNA-dependent RNA polymerase catalyzes the transcription of DNA into RNA using the four ribonucleoside triphosphates as substrates. The sequence is that of DNA-directed RNA polymerase subunit beta from Erwinia tasmaniensis (strain DSM 17950 / CFBP 7177 / CIP 109463 / NCPPB 4357 / Et1/99).